The sequence spans 935 residues: Auxin response factor 6 (935 aa).

The segment at residues Phe-129–Asn-231 is a DNA-binding region (TF-B3). 2 disordered regions span residues Gln-536–Thr-624 and Ser-645–Asp-714. Low complexity-rich tracts occupy residues Gln-546–Gln-565 and Ser-573–Ala-582. Composition is skewed to polar residues over residues Met-583–Thr-624 and Ser-661–Pro-689. The PB1 domain maps to Asn-796 to Glu-880. Polar residues predominate over residues Pro-896–Asn-909. The segment at Pro-896 to Ser-917 is disordered.

It belongs to the ARF family. In terms of assembly, homodimers and heterodimers. Expressed in the whole plant.

It is found in the nucleus. Functionally, auxin response factors (ARFs) are transcriptional factors that bind specifically to the DNA sequence 5'-TGTCTC-3' found in the auxin-responsive promoter elements (AuxREs). Seems to act as transcriptional activator. Formation of heterodimers with Aux/IAA proteins may alter their ability to modulate early auxin response genes expression. Regulates both stamen and gynoecium maturation. Promotes jasmonic acid production. Partially redundant with ARF8. The sequence is that of Auxin response factor 6 (ARF6) from Arabidopsis thaliana (Mouse-ear cress).